We begin with the raw amino-acid sequence, 103 residues long: Probable protease inhibitor Egf0.4a (103 aa).

The signal sequence occupies residues 1 to 22 (MMSEKFALVLLVACIAFIGIET). The 53-residue stretch at 35–87 (CGENEAYDSMRRGCEKRCDDHNPTFCFKFTTVCWCEKGYVRDKSDTCIKVEDC) folds into the TIL domain.

This sequence belongs to the polydnaviridae EGF-like motif protein family.

The sequence is that of Probable protease inhibitor Egf0.4a (O4) from Microplitis demolitor (Parasitoid wasp).